Consider the following 440-residue polypeptide: Cytochrome c biogenesis protein Ccs1 (440 aa).

A run of 3 helical transmembrane segments spans residues 25–45 (LQFSIILLLLIAIFSTIGTVI), 84–104 (TWWFLSLLFIFSLSLFTCSIS), and 170–190 (LAPIFVHGSIILLLTGSVLGL).

The protein belongs to the Ccs1/CcsB family. As to quaternary structure, may interact with CcsA.

The protein localises to the plastid. It is found in the chloroplast thylakoid membrane. Required during biogenesis of c-type cytochromes (cytochrome c6 and cytochrome f) at the step of heme attachment. The sequence is that of Cytochrome c biogenesis protein Ccs1 from Pyropia yezoensis (Susabi-nori).